A 464-amino-acid polypeptide reads, in one-letter code: MLLENIGYDNKSSLLIVKRLITTMYQQNYLIISANDSKQNPFFGYNKNLHSKILSEGFAIIVEIPFYLRLISSLEGAEIVRFYNLRSIHSIFPFLEEKFPHLNYSADILIPYPAHLEILVQTLRYRVKDASYLHLLRFFLHEYSNCNSLIITNKSISIFSKSNPRFFLFLYNSYICEYESIFLFLRNQSSHLRLTSSGVLFERLCLYRKIEHFAEVFANDFPVIPCFLKDPFMHYVRYQGKSILASKDTPLLMNKWKSYLVNLWQCHFDVWSHAASIRINQLSKHSLDFLSYFSSVRRNPAVVRNQMLENSFPLNNAPNKLDTIVPIIPLIGSLAKAKFCNAVGHPISKLTRADLSDFEIINRFLHICRNLSHYYSGSSKKKNMYRIKYILRLSCVKTLARKHKSTARAFLKRVDSEFFQEFFTEEGGFISLIFPRASFALRRLYSGRVWYLDIIFINGLSNHE.

The protein belongs to the intron maturase 2 family. MatK subfamily.

It is found in the plastid. The protein resides in the chloroplast. Its function is as follows. Usually encoded in the trnK tRNA gene intron. Probably assists in splicing its own and other chloroplast group II introns. This is Maturase K from Castanea crenata (Japanese chestnut).